A 129-amino-acid chain; its full sequence is Small ribosomal subunit protein uS11 (129 aa).

This sequence belongs to the universal ribosomal protein uS11 family. Part of the 30S ribosomal subunit. Interacts with proteins S7 and S18. Binds to IF-3.

In terms of biological role, located on the platform of the 30S subunit, it bridges several disparate RNA helices of the 16S rRNA. Forms part of the Shine-Dalgarno cleft in the 70S ribosome. The polypeptide is Small ribosomal subunit protein uS11 (Bacillus cereus (strain ATCC 14579 / DSM 31 / CCUG 7414 / JCM 2152 / NBRC 15305 / NCIMB 9373 / NCTC 2599 / NRRL B-3711)).